We begin with the raw amino-acid sequence, 99 residues long: Keratinocyte differentiation-associated protein (99 aa).

Positions 1–22 (MKIPVLPAVVLLSLLVLHSAQG) are cleaved as a signal peptide.

As to expression, highly expressed in skin and detected at lower levels in thymus. In skin, found exclusively in lamellar granules of granular keratinocytes and in the intracellular space of the stratum corneum. Also highly expressed in oral mucosa, tongue, esophagus, and stomach, and at much lower levels in bladder and uterus. Not detected in gastrointestinal mucosa.

The protein resides in the secreted. May act as a soluble regulator of keratinocyte differentiation. May play an important role in embryonic skin morphogenesis. The sequence is that of Keratinocyte differentiation-associated protein (KRTDAP) from Homo sapiens (Human).